The sequence spans 963 residues: Protein NLP2 (963 aa).

The RWP-RK domain maps to R635 to S716. Positions M734–Q755 are enriched in polar residues. Residues M734–N794 form a disordered region. Over residues G756 to N794 the composition is skewed to low complexity. The 84-residue stretch at A862 to A945 folds into the PB1 domain.

The protein resides in the nucleus. In terms of biological role, probable transcription factor. The chain is Protein NLP2 (NLP2) from Arabidopsis thaliana (Mouse-ear cress).